The following is a 404-amino-acid chain: Argininosuccinate synthase (404 aa).

7 to 15 (AYSGGLDTS) is an ATP binding site. Residues tyrosine 85 and serine 90 each contribute to the L-citrulline site. Residue glycine 115 coordinates ATP. Threonine 117, asparagine 121, and aspartate 122 together coordinate L-aspartate. Asparagine 121 is an L-citrulline binding site. L-citrulline contacts are provided by arginine 125, serine 178, serine 187, glutamate 264, and tyrosine 276.

It belongs to the argininosuccinate synthase family. Type 1 subfamily. Homotetramer.

It is found in the cytoplasm. It catalyses the reaction L-citrulline + L-aspartate + ATP = 2-(N(omega)-L-arginino)succinate + AMP + diphosphate + H(+). The protein operates within amino-acid biosynthesis; L-arginine biosynthesis; L-arginine from L-ornithine and carbamoyl phosphate: step 2/3. The polypeptide is Argininosuccinate synthase (Rhodopirellula baltica (strain DSM 10527 / NCIMB 13988 / SH1)).